The primary structure comprises 320 residues: tRNA dimethylallyltransferase (320 aa).

17 to 24 (GPTAVGKT) contributes to the ATP binding site. 19–24 (TAVGKT) contacts substrate. The tract at residues 42–45 (DSMQ) is interaction with substrate tRNA.

The protein belongs to the IPP transferase family. In terms of assembly, monomer. Requires Mg(2+) as cofactor.

It carries out the reaction adenosine(37) in tRNA + dimethylallyl diphosphate = N(6)-dimethylallyladenosine(37) in tRNA + diphosphate. Its function is as follows. Catalyzes the transfer of a dimethylallyl group onto the adenine at position 37 in tRNAs that read codons beginning with uridine, leading to the formation of N6-(dimethylallyl)adenosine (i(6)A). The protein is tRNA dimethylallyltransferase of Bacillus thuringiensis (strain Al Hakam).